Consider the following 98-residue polypeptide: NADH-ubiquinone oxidoreductase chain 4L (98 aa).

The next 3 membrane-spanning stretches (helical) occupy residues 1-21 (MSLTYMNMFLAFTISLVGLLM), 29-49 (ALLCLEGMMLSLFVMMTITIL), and 61-81 (IILLVFAACEAALGLSLLVMV).

This sequence belongs to the complex I subunit 4L family. In terms of assembly, core subunit of respiratory chain NADH dehydrogenase (Complex I) which is composed of 45 different subunits.

Its subcellular location is the mitochondrion inner membrane. It carries out the reaction a ubiquinone + NADH + 5 H(+)(in) = a ubiquinol + NAD(+) + 4 H(+)(out). Core subunit of the mitochondrial membrane respiratory chain NADH dehydrogenase (Complex I) which catalyzes electron transfer from NADH through the respiratory chain, using ubiquinone as an electron acceptor. Part of the enzyme membrane arm which is embedded in the lipid bilayer and involved in proton translocation. The protein is NADH-ubiquinone oxidoreductase chain 4L (MT-ND4L) of Rhinophylla pumilio (Dwarf little fruit bat).